The primary structure comprises 505 residues: Lysine--tRNA ligase (505 aa).

Mg(2+)-binding residues include E403 and E410.

The protein belongs to the class-II aminoacyl-tRNA synthetase family. In terms of assembly, homodimer. Requires Mg(2+) as cofactor.

It localises to the cytoplasm. The catalysed reaction is tRNA(Lys) + L-lysine + ATP = L-lysyl-tRNA(Lys) + AMP + diphosphate. This Methanospirillum hungatei JF-1 (strain ATCC 27890 / DSM 864 / NBRC 100397 / JF-1) protein is Lysine--tRNA ligase.